The following is a 210-amino-acid chain: Protein PF1979 (210 aa).

The AMMECR1 domain maps to 7-201; sequence EWGEFLVRLA…EEYPRGPVKR (195 aa).

The sequence is that of Protein PF1979 from Pyrococcus furiosus (strain ATCC 43587 / DSM 3638 / JCM 8422 / Vc1).